Here is an 832-residue protein sequence, read N- to C-terminus: Sodium/hydrogen exchanger 3 (832 aa).

The first 29 residues, 1 to 29 (MSGRGGCGPCWGLLLALVLALGALPWTQG), serve as a signal peptide directing secretion. Over 30 to 50 (AEQEHHDEIQGFQIVTFKWHH) the chain is Extracellular. Residues 51-73 (VQDPYIIALWVLVASLAKIVFHL) form a helical membrane-spanning segment. Residues 74-81 (SHKVTSVV) are Cytoplasmic-facing. Residues 82–101 (PESALLIVLGLVLGGIVLAA) form a helical membrane-spanning segment. Residues 102 to 110 (DHIASFTLT) are Extracellular-facing. Residues 111–128 (PTVFFFYLLPPIVLDAGY) form a helical membrane-spanning segment. Topologically, residues 129–131 (FMP) are cytoplasmic. The chain crosses the membrane as a helical span at residues 132-167 (NRLFFSNLGSILLYAVVGTVWNAATTGLSLYGVFLS). A 1,2-diacyl-sn-glycero-3-phospho-(1D-myo-inositol) is bound by residues G140 and S141. Residues 168-180 (GIMGELKIGLLDF) lie on the Extracellular side of the membrane. A helical transmembrane segment spans residues 181–202 (LLFGSLIAAVDPVAVLAVFEEV). Residues 203–204 (HV) lie on the Cytoplasmic side of the membrane. Residues 205-236 (NEVLFIIVFGESLLNDAVTVVLYNVFQSFVTL) form a helical membrane-spanning segment. The Extracellular segment spans residues 237 to 243 (GGDKVTG). Residues 244–278 (VDCVKGIVSFFVVSLGGTLVGVVFAFLLSLVTRFT) traverse the membrane as a helical segment. Residues 279–280 (KH) lie on the Cytoplasmic side of the membrane. A helical transmembrane segment spans residues 281 to 303 (VRVIEPGFVFIISYLSYLTSEML). Residues 304–305 (SL) lie on the Extracellular side of the membrane. Residues 306–322 (SSILAITFCGICCQKYV) traverse the membrane as a helical segment. The Cytoplasmic segment spans residues 323-329 (KANISEQ). A helical membrane pass occupies residues 330–358 (SATTVRYTMKMLASGAETIIFMFLGISAV). The Extracellular portion of the chain corresponds to 359 to 366 (DPLIWTWN). Residues 367–388 (TAFVLLTLLFVSVFRAIGVVLQ) form a helical membrane-spanning segment. Over 389-401 (TWLLNRYRMVQLE) the chain is Cytoplasmic. M397 serves as a coordination point for a 1,2-diacyl-sn-glycero-3-phospho-(1D-myo-inositol). Residues 402 to 425 (LIDQVVMSYGGLRGAVAFALVALL) form a helical membrane-spanning segment. Over 426–432 (DGNKVKE) the chain is Extracellular. A helical transmembrane segment spans residues 433–466 (KNLFVSTTIIVVFFTVIFQGLTIKPLVQWLKVKR). The Cytoplasmic portion of the chain corresponds to 467–832 (SEHREPKLNE…GAEHPESTHM (366 aa)). A 1,2-diacyl-sn-glycero-3-phospho-(1D-myo-inositol) contacts are provided by Q496, I497, and H499. Phosphoserine occurs at positions 554 and 562. Residues 575–589 (RPSTVEASVSYLLRE) are interaction with EZR. Residues 590-667 (SASAVCLDMQ…RKRLESFKSA (78 aa)) form an interaction with NHERF4 region. An interaction with AHCYL1 region spans residues 591–696 (ASAVCLDMQS…AQKRRNSSVP (106 aa)). Phosphoserine occurs at positions 592 and 607. S663 is modified (phosphoserine; by SGK1). Positions 664-706 (FKSAKLGLGQSKKATKHKRERERAQKRRNSSVPNGKLPLDSPA) are disordered. Basic residues predominate over residues 676 to 692 (KATKHKRERERAQKRRN). Residues S719, S813, and S816 each carry the phosphoserine modification.

This sequence belongs to the monovalent cation:proton antiporter 1 (CPA1) transporter (TC 2.A.36) family. As to quaternary structure, homodimer. Found in the forms of complex and dynamic macromolecular complexes. Interacts with CHP1; this interaction increases trafficking and activity at the plasma membrane of SLC9A3. Interacts with CHP2 and SHANK2. Interacts with NHERF4 and interaction decreases in response to elevated calcium ion levels. Binds NHERF1 and NHERF2. Interacts with PDZK1 (via C-terminal PDZ domain). Interacts with AHCYL1; interaction is required for SLC9A3 activity. Interacts with EZR; interaction targets SLC9A3 to the apical membrane. Interacts with SNX27 (via PDZ domains); directs SLC9A3 membrane insertion from early endosomes to the plasma membrane. Post-translationally, phosphorylated by PKA, which inhibits activity. Phosphorylation at Ser-663 by SGK1 is associated with increased abundance at the cell membrane and activity. Phosphorylation at Ser-719 by CSNK2A1 regulates SLC9A3 activity through the formation of multiple signaling complexes. In terms of tissue distribution, intestinal and kidney specific. Most abundant in kidney cortex, followed equally by ileum and ascending colon, then kidney medulla and jejunum. Is absent from duodenum and descending colon.

It localises to the apical cell membrane. It is found in the cell membrane. Its subcellular location is the recycling endosome membrane. The protein resides in the early endosome membrane. The catalysed reaction is Na(+)(in) + H(+)(out) = Na(+)(out) + H(+)(in). Its activity is regulated as follows. Seems to switch between active and inactive modes in response to various stimuli. Activated directly or indirectly by membrane phosphatidylinositol (PIs). Regulated by a variety of auxiliary proteins, which facilitate the maturation, cell surface expression and function of the transporter. Inhibited specifically by the drug tenapanor. Functionally, plasma membrane Na(+)/H(+) antiporter. Exchanges intracellular H(+) ions for extracellular Na(+) in 1:1 stoichiometry, playing a key role in salt and fluid absorption and pH homeostasis. Major apical Na(+)/H(+) exchanger in kidney and intestine playing an important role in renal and intestine Na(+) absorption and blood pressure regulation. In Oryctolagus cuniculus (Rabbit), this protein is Sodium/hydrogen exchanger 3 (SLC9A3).